A 434-amino-acid polypeptide reads, in one-letter code: Trigger factor (434 aa).

Positions 161 to 246 (EDRVTVDFTG…LKKVEQRELP (86 aa)) constitute a PPIase FKBP-type domain.

Belongs to the FKBP-type PPIase family. Tig subfamily.

The protein localises to the cytoplasm. The enzyme catalyses [protein]-peptidylproline (omega=180) = [protein]-peptidylproline (omega=0). Functionally, involved in protein export. Acts as a chaperone by maintaining the newly synthesized protein in an open conformation. Functions as a peptidyl-prolyl cis-trans isomerase. The polypeptide is Trigger factor (Sodalis glossinidius (strain morsitans)).